Reading from the N-terminus, the 380-residue chain is Erythronate-4-phosphate dehydrogenase (380 aa).

Substrate contacts are provided by serine 45 and threonine 66. Cysteine 65 and cysteine 90 form a disulfide bridge. NAD(+) contacts are provided by residues 126 to 127 (QV), aspartate 146, threonine 175, 206 to 208 (ASR), and aspartate 232. Residue arginine 208 is part of the active site. Glutamate 237 is an active-site residue. Histidine 254 acts as the Proton donor in catalysis. Glycine 257 contacts NAD(+). Residue tyrosine 258 coordinates substrate.

It belongs to the D-isomer specific 2-hydroxyacid dehydrogenase family. PdxB subfamily. In terms of assembly, homodimer.

The protein resides in the cytoplasm. It catalyses the reaction 4-phospho-D-erythronate + NAD(+) = (R)-3-hydroxy-2-oxo-4-phosphooxybutanoate + NADH + H(+). It participates in cofactor biosynthesis; pyridoxine 5'-phosphate biosynthesis; pyridoxine 5'-phosphate from D-erythrose 4-phosphate: step 2/5. Catalyzes the oxidation of erythronate-4-phosphate to 3-hydroxy-2-oxo-4-phosphonooxybutanoate. In Pseudomonas aeruginosa (strain ATCC 15692 / DSM 22644 / CIP 104116 / JCM 14847 / LMG 12228 / 1C / PRS 101 / PAO1), this protein is Erythronate-4-phosphate dehydrogenase.